Reading from the N-terminus, the 447-residue chain is Phosphoglucosamine mutase (447 aa).

Catalysis depends on Ser102, which acts as the Phosphoserine intermediate. Residues Ser102, Asp241, Asp243, and Asp245 each coordinate Mg(2+). The residue at position 102 (Ser102) is a Phosphoserine.

Belongs to the phosphohexose mutase family. Mg(2+) is required as a cofactor. Activated by phosphorylation.

It catalyses the reaction alpha-D-glucosamine 1-phosphate = D-glucosamine 6-phosphate. Catalyzes the conversion of glucosamine-6-phosphate to glucosamine-1-phosphate. The chain is Phosphoglucosamine mutase from Methylococcus capsulatus (strain ATCC 33009 / NCIMB 11132 / Bath).